A 243-amino-acid polypeptide reads, in one-letter code: Glycerophosphodiester phosphodiesterase (243 aa).

Residues 3–239 (TLVIAHRGDS…DDPETLINLV (237 aa)) enclose the GP-PDE domain. The active-site Proton acceptor is the His-8. Residues Glu-35 and Asp-37 each contribute to the Ca(2+) site. Residue His-50 is the Proton donor of the active site. Glu-110 provides a ligand contact to Ca(2+).

The protein belongs to the glycerophosphoryl diester phosphodiesterase family. In terms of assembly, homodimer. Mg(2+) serves as cofactor. It depends on Ca(2+) as a cofactor.

It catalyses the reaction a sn-glycero-3-phosphodiester + H2O = an alcohol + sn-glycerol 3-phosphate + H(+). The enzyme catalyses sn-glycerol 3-phosphocholine + H2O = sn-glycerol 3-phosphate + choline + H(+). Inhibited by EDTA. Functionally, glycerophosphodiester phosphodiesterase hydrolyzes glycerophosphodiesters into glycerol-3-phosphate (G3P) and the corresponding alcohol. Can use glycerophosphocholine. This chain is Glycerophosphodiester phosphodiesterase, found in Caldanaerobacter subterraneus subsp. tengcongensis (strain DSM 15242 / JCM 11007 / NBRC 100824 / MB4) (Thermoanaerobacter tengcongensis).